A 1436-amino-acid polypeptide reads, in one-letter code: ABC transporter C family member 15 (1436 aa).

7 helical membrane-spanning segments follow: residues 8-28, 129-149, 165-185, 238-258, 261-281, 349-369, and 373-393; these read IINK…IYLY, YIAT…PLIL, IYIG…NMAS, FFQY…IQIL, LGFL…VMLI, IIYW…VLVS, and TYTL…ITIL. An ABC transmembrane type-1 1 domain is found at 128 to 412; the sequence is NYIATGLFVF…LPDCLHKFIS (285 aa). Residues 543 to 766 enclose the ABC transporter 1 domain; it reads ADYQDLLSIN…IDFEMILKEK (224 aa). 575–582 contacts ATP; that stretch reads GGVRSGKT. Positions 865-1155 constitute an ABC transmembrane type-1 2 domain; it reads KKYIRMGSSI…FMRQFGELES (291 aa). Transmembrane regions (helical) follow at residues 873-893, 919-939, 985-1005, 1017-1039, 1101-1121, and 1127-1147; these read SISF…ILLL, LIYL…YLLI, IDIL…CLVT, IAIP…NYSV, IGIR…LFSI, and GLSA…NWFM. The ABC transporter 2 domain maps to 1193–1426; the sequence is IEFKNVEIRY…STSRFSKLIK (234 aa). Residue 1227–1234 coordinates ATP; that stretch reads GRSGSGKS.

It belongs to the ABC transporter superfamily. ABCC family. Conjugate transporter (TC 3.A.1.208) subfamily.

The protein resides in the membrane. In Dictyostelium discoideum (Social amoeba), this protein is ABC transporter C family member 15 (abcC15).